The chain runs to 469 residues: Ribulose bisphosphate carboxylase large chain (469 aa).

Residues 1–2 (MS) constitute a propeptide that is removed on maturation. Residue Pro3 is modified to N-acetylproline. An N6,N6,N6-trimethyllysine modification is found at Lys14. Residues Asn123 and Thr173 each contribute to the substrate site. Lys175 acts as the Proton acceptor in catalysis. Lys177 serves as a coordination point for substrate. Mg(2+) contacts are provided by Lys201, Asp203, and Glu204. Position 201 is an N6-carboxylysine (Lys201). His294 functions as the Proton acceptor in the catalytic mechanism. Substrate is bound by residues Arg295, His327, and Ser379.

Belongs to the RuBisCO large chain family. Type I subfamily. As to quaternary structure, heterohexadecamer of 8 large chains and 8 small chains; disulfide-linked. The disulfide link is formed within the large subunit homodimers. The cofactor is Mg(2+). Post-translationally, the disulfide bond which can form in the large chain dimeric partners within the hexadecamer appears to be associated with oxidative stress and protein turnover.

The protein resides in the plastid. Its subcellular location is the chloroplast. It carries out the reaction 2 (2R)-3-phosphoglycerate + 2 H(+) = D-ribulose 1,5-bisphosphate + CO2 + H2O. The enzyme catalyses D-ribulose 1,5-bisphosphate + O2 = 2-phosphoglycolate + (2R)-3-phosphoglycerate + 2 H(+). Its function is as follows. RuBisCO catalyzes two reactions: the carboxylation of D-ribulose 1,5-bisphosphate, the primary event in carbon dioxide fixation, as well as the oxidative fragmentation of the pentose substrate in the photorespiration process. Both reactions occur simultaneously and in competition at the same active site. The protein is Ribulose bisphosphate carboxylase large chain of Atriplex patula (Common orache).